Here is a 147-residue protein sequence, read N- to C-terminus: Siroheme decarboxylase NirG subunit (147 aa).

This sequence belongs to the Ahb/Nir family. In terms of assembly, probably forms a complex composed of NirD, NirL, NirG and NirH. All proteins are required for the total conversion of siroheme to didecarboxysiroheme.

The enzyme catalyses siroheme + 2 H(+) = 12,18-didecarboxysiroheme + 2 CO2. The protein operates within porphyrin-containing compound metabolism. Its function is as follows. Involved in heme d1 biosynthesis. Catalyzes the decarboxylation of siroheme into didecarboxysiroheme. The polypeptide is Siroheme decarboxylase NirG subunit (Pseudomonas aeruginosa (strain ATCC 15692 / DSM 22644 / CIP 104116 / JCM 14847 / LMG 12228 / 1C / PRS 101 / PAO1)).